The following is a 61-amino-acid chain: MPNILSLTCICFNSVIYPTSFFFAKLPEAYAIFNPIVDFMPVIPVLFFLLAFVWQAAVSFR.

Residues 1–24 (MPNILSLTCICFNSVIYPTSFFFA) constitute a propeptide that is removed on maturation. The helical transmembrane segment at 32–52 (IFNPIVDFMPVIPVLFFLLAF) threads the bilayer.

Belongs to the PsbK family. PSII is composed of 1 copy each of membrane proteins PsbA, PsbB, PsbC, PsbD, PsbE, PsbF, PsbH, PsbI, PsbJ, PsbK, PsbL, PsbM, PsbT, PsbX, PsbY, PsbZ, Psb30/Ycf12, at least 3 peripheral proteins of the oxygen-evolving complex and a large number of cofactors. It forms dimeric complexes.

The protein resides in the plastid. The protein localises to the chloroplast thylakoid membrane. One of the components of the core complex of photosystem II (PSII). PSII is a light-driven water:plastoquinone oxidoreductase that uses light energy to abstract electrons from H(2)O, generating O(2) and a proton gradient subsequently used for ATP formation. It consists of a core antenna complex that captures photons, and an electron transfer chain that converts photonic excitation into a charge separation. The protein is Photosystem II reaction center protein K of Oryza nivara (Indian wild rice).